A 207-amino-acid polypeptide reads, in one-letter code: Testis-expressed protein 35 (207 aa).

Residues 43 to 79 (RKGMTRELKNELREVREQLTEKMEEIKQIKDIMDKDF) are a coiled coil.

Testis-specific. Expressed during spermatogenesis.

It localises to the nucleus. This is Testis-expressed protein 35 (Tex35) from Mus musculus (Mouse).